A 562-amino-acid chain; its full sequence is Glutamine--tRNA ligase (562 aa).

Positions 35-45 (PEPNGYLHIGH) match the 'HIGH' region motif. ATP is bound by residues 36–38 (EPN) and 42–48 (HIGHAKS). Residues Asp68 and Tyr213 each coordinate L-glutamine. Residues Thr232 and 264–265 (RL) each bind ATP. Positions 271–275 (ITSKR) match the 'KMSKS' region motif.

The protein belongs to the class-I aminoacyl-tRNA synthetase family. In terms of assembly, monomer.

Its subcellular location is the cytoplasm. The enzyme catalyses tRNA(Gln) + L-glutamine + ATP = L-glutaminyl-tRNA(Gln) + AMP + diphosphate. This is Glutamine--tRNA ligase from Neisseria gonorrhoeae (strain ATCC 700825 / FA 1090).